A 197-amino-acid chain; its full sequence is Protein GrpE (197 aa).

Over residues 1-27 (MSNKEQHIEKEEQLQEEKHEEQQKTEE) the composition is skewed to basic and acidic residues. Positions 1–34 (MSNKEQHIEKEEQLQEEKHEEQQKTEETEVEAVN) are disordered.

The protein belongs to the GrpE family. In terms of assembly, homodimer.

Its subcellular location is the cytoplasm. In terms of biological role, participates actively in the response to hyperosmotic and heat shock by preventing the aggregation of stress-denatured proteins, in association with DnaK and GrpE. It is the nucleotide exchange factor for DnaK and may function as a thermosensor. Unfolded proteins bind initially to DnaJ; upon interaction with the DnaJ-bound protein, DnaK hydrolyzes its bound ATP, resulting in the formation of a stable complex. GrpE releases ADP from DnaK; ATP binding to DnaK triggers the release of the substrate protein, thus completing the reaction cycle. Several rounds of ATP-dependent interactions between DnaJ, DnaK and GrpE are required for fully efficient folding. The polypeptide is Protein GrpE (Pasteurella multocida (strain Pm70)).